We begin with the raw amino-acid sequence, 371 residues long: Queuine tRNA-ribosyltransferase (371 aa).

The active-site Proton acceptor is the Asp-90. Substrate contacts are provided by residues 90–94, Asp-144, Gln-188, and Gly-215; that span reads DSGGF. Positions 246–252 are RNA binding; sequence GVGTPED. Asp-265 functions as the Nucleophile in the catalytic mechanism. Residues 270 to 274 form an RNA binding; important for wobble base 34 recognition region; it reads TRNAR. Positions 303, 305, 308, and 334 each coordinate Zn(2+).

The protein belongs to the queuine tRNA-ribosyltransferase family. In terms of assembly, homodimer. Within each dimer, one monomer is responsible for RNA recognition and catalysis, while the other monomer binds to the replacement base PreQ1. Zn(2+) is required as a cofactor.

The enzyme catalyses 7-aminomethyl-7-carbaguanine + guanosine(34) in tRNA = 7-aminomethyl-7-carbaguanosine(34) in tRNA + guanine. The protein operates within tRNA modification; tRNA-queuosine biosynthesis. In terms of biological role, catalyzes the base-exchange of a guanine (G) residue with the queuine precursor 7-aminomethyl-7-deazaguanine (PreQ1) at position 34 (anticodon wobble position) in tRNAs with GU(N) anticodons (tRNA-Asp, -Asn, -His and -Tyr). Catalysis occurs through a double-displacement mechanism. The nucleophile active site attacks the C1' of nucleotide 34 to detach the guanine base from the RNA, forming a covalent enzyme-RNA intermediate. The proton acceptor active site deprotonates the incoming PreQ1, allowing a nucleophilic attack on the C1' of the ribose to form the product. After dissociation, two additional enzymatic reactions on the tRNA convert PreQ1 to queuine (Q), resulting in the hypermodified nucleoside queuosine (7-(((4,5-cis-dihydroxy-2-cyclopenten-1-yl)amino)methyl)-7-deazaguanosine). This chain is Queuine tRNA-ribosyltransferase, found in Neisseria gonorrhoeae (strain NCCP11945).